Here is a 500-residue protein sequence, read N- to C-terminus: DNA polymerase processivity factor (500 aa).

The disordered stretch occupies residues 388 to 500; it reads VSESDDAAAE…QEPANKRGKR (113 aa). The segment covering 438-449 has biased composition (polar residues); sequence TLQQSAQPSSPA.

This sequence belongs to the herpesviridae DNA polymerase processivity factor family. In terms of assembly, interacts with the DNA polymerase catalytic subunit UL30. Interacts with the origin-binding protein.

It is found in the host nucleus. Plays an essential role in viral DNA replication by acting as the polymerase accessory subunit. Associates with the viral polymerase to increase its processivity and forms high-affinity direct interactions with DNA. Facilitates the origin-binding protein UL9 loading onto DNA thus increasing its ability to assemble into a functional complex capable of unwinding duplex DNA. The chain is DNA polymerase processivity factor (UL42) from Amazona oratrix (yellow-headed parrot).